The following is a 74-amino-acid chain: Kappa-stichotoxin-Hmg1a (74 aa).

The first 22 residues, 1-22, serve as a signal peptide directing secretion; it reads MKSQMIAAVLLIAFCLCVVVTA. Positions 23–39 are excised as a propeptide; it reads RMELQDVEDMENGFQKR. The ShKT domain occupies 42-74; it reads CKDLIPVSECTDIRCRTSMKYRLNLCRKTCGSC. Intrachain disulfides connect Cys42/Cys74, Cys51/Cys67, and Cys56/Cys71.

Belongs to the sea anemone type 1 potassium channel toxin family. Type 1a subfamily.

It is found in the secreted. It localises to the nematocyst. Functionally, potently blocks the voltage-gated potassium channel Kv1.1/KCNA1 (Ki=75 pM), KcsA (Ki~1 nM) and moderately blocks Kv1.2/KCNA2 (Ki=2.5 nM) and Kv1.3/KCNA3 (Ki=3.1 nM). Also facilitates acetylcholine release at the avian neuromuscular junction. Blockade and dissociation rate are sensitive to voltage. This chain is Kappa-stichotoxin-Hmg1a, found in Heteractis magnifica (Magnificent sea anemone).